Here is a 375-residue protein sequence, read N- to C-terminus: 23S rRNA (uracil(747)-C(5))-methyltransferase RlmC (375 aa).

Residues Cys-3, Cys-11, Cys-14, and Cys-87 each contribute to the [4Fe-4S] cluster site. Positions 212, 241, 262, and 307 each coordinate S-adenosyl-L-methionine. The Nucleophile role is filled by Cys-334.

This sequence belongs to the class I-like SAM-binding methyltransferase superfamily. RNA M5U methyltransferase family. RlmC subfamily.

It catalyses the reaction uridine(747) in 23S rRNA + S-adenosyl-L-methionine = 5-methyluridine(747) in 23S rRNA + S-adenosyl-L-homocysteine + H(+). Functionally, catalyzes the formation of 5-methyl-uridine at position 747 (m5U747) in 23S rRNA. In Cronobacter sakazakii (strain ATCC BAA-894) (Enterobacter sakazakii), this protein is 23S rRNA (uracil(747)-C(5))-methyltransferase RlmC.